The following is a 369-amino-acid chain: Probable serine/threonine-protein kinase DDB_G0291350 (369 aa).

One can recognise a Protein kinase domain in the interval 22–367 (YTVNRILGEG…QVIERINQII (346 aa)). ATP-binding positions include 28–36 (LGEGGFSFV) and K51. D159 serves as the catalytic Proton acceptor. Positions 169–225 (NLRRPSNNNNNNNNNNNNNNNNNNNNNNNNNNNNNNNNNNNNNNNNNNNNNNNSEDS) are disordered. Low complexity predominate over residues 175–221 (NNNNNNNNNNNNNNNNNNNNNNNNNNNNNNNNNNNNNNNNNNNNNNN).

The protein belongs to the protein kinase superfamily. Ser/Thr protein kinase family.

The enzyme catalyses L-seryl-[protein] + ATP = O-phospho-L-seryl-[protein] + ADP + H(+). It catalyses the reaction L-threonyl-[protein] + ATP = O-phospho-L-threonyl-[protein] + ADP + H(+). This Dictyostelium discoideum (Social amoeba) protein is Probable serine/threonine-protein kinase DDB_G0291350.